The chain runs to 377 residues: Mitogen-activated protein kinase pmk-1 (377 aa).

The region spanning 35-319 (YINLTPIGTG…AKEAMEHEYL (285 aa)) is the Protein kinase domain. Residues 41 to 49 (IGTGAYGTV) and K64 contribute to the ATP site. Residue D179 is the Proton acceptor of the active site. The residue at position 191 (T191) is a Phosphothreonine. Positions 191–193 (TGY) match the TXY motif. Residue Y193 is modified to Phosphotyrosine.

Belongs to the protein kinase superfamily. CMGC Ser/Thr protein kinase family. MAP kinase subfamily. In terms of assembly, interacts with transcription factor atf-7; perhaps in a manner dependent on dual specificity protein kinase sek-1. Mg(2+) serves as cofactor. Mn(2+) is required as a cofactor. Post-translationally, dually phosphorylated on Thr-191 and Tyr-193, probably by sek-1, which activates the enzyme. Increased phosphorylation in response to the heavy metal arsenite. Increased phosphorylation in response to intestinal colonization by probiotic Lactobacillus fermentum strain JDFM216. Expressed in intestinal cells.

It localises to the nucleus. The enzyme catalyses L-seryl-[protein] + ATP = O-phospho-L-seryl-[protein] + ADP + H(+). It carries out the reaction L-threonyl-[protein] + ATP = O-phospho-L-threonyl-[protein] + ADP + H(+). Activated by phosphorylation on threonine and tyrosine. Inhibited by pyridinyl-imidazole related compounds. Functionally, serine/threonine kinase which responds to activation by environmental stress and pro-inflammatory cytokines by phosphorylating downstream targets. As part of a MAP kinase signaling pathway, plays a role in modulation of lifespan and immunity. Phosphorylates skn-1 which probably regulates skn-1 nuclear translocation in response to oxidative stress. Probably by activating skn-1, involved in the up-regulation of gcs-1 and glutathione-S-transferase gst-4 expression upon bacteria infection. Up-regulates expression of gcs-1 in intestinal cells upon arsenite treatment. Functions downstream of the MAPKK sek-1 and the MAPKKK nsy-1 as the MAP kinase which regulates pathogen resistance and responses to oxidative stress. Required for expression of antimicrobial peptide nlp-29 in response to fungal infection or physical injury. Involved in resistance to the nematotoxic C.cinerea galectin (Cgl2). May play a redundant role with other MAP kinases in susceptibility to anoxia, downstream of tir-1/nsy-1. Phosphorylates transcription factor rnt-1 during oxidative stress which results in rnt-1 stabilization in the intestine. Phosphorylates transcription factor atf-7 during pathogen infection resulting in modulation of target genes. Probably downstream of nsy-1 and sek-1, involved in germline apoptosis induced by heavy metals, such as Cu(2+). Regulates the basal expression of immune effector genes including irg-4, irg-5, mul-1 and drd-50. In Caenorhabditis elegans, this protein is Mitogen-activated protein kinase pmk-1.